Consider the following 252-residue polypeptide: uncharacterized protein (252 aa).

The protein resides in the plastid. It localises to the chloroplast. This is an uncharacterized protein from Guillardia theta (Cryptophyte).